The chain runs to 515 residues: Protein disulfide-isomerase (515 aa).

The signal sequence occupies residues 1–20 (MRSFAPWLVSLLGASAVVAA). Thioredoxin domains follow at residues 21-132 (ADTE…QSLP) and 339-470 (VLDG…ENGK). Catalysis depends on nucleophile residues Cys54, Cys57, Cys389, and Cys392. 2 disulfides stabilise this stretch: Cys54–Cys57 and Cys389–Cys392. The segment at 478–515 (VASEETQEGGDVTEAAPSATEAETPAATDDEKAEHDEL) is disordered. The span at 490–504 (TEAAPSATEAETPAA) shows a compositional bias: low complexity. Residues 506–515 (DDEKAEHDEL) are compositionally biased toward basic and acidic residues. The Prevents secretion from ER motif lies at 512–515 (HDEL).

The protein belongs to the protein disulfide isomerase family.

The protein localises to the endoplasmic reticulum lumen. The catalysed reaction is Catalyzes the rearrangement of -S-S- bonds in proteins.. Its function is as follows. Participates in the folding of proteins containing disulfide bonds, may be involved in glycosylation, prolyl hydroxylation and triglyceride transfer. The protein is Protein disulfide-isomerase (pdiA) of Aspergillus niger.